The primary structure comprises 372 residues: Alanine dehydrogenase (372 aa).

The substrate site is built by R15 and K75. Residue H96 is the Proton donor/acceptor of the active site. NAD(+) contacts are provided by residues S134, 178–179, D198, S220, 239–240, 267–270, R280, and 299–302; these read IA, VL, IAID, and VANM. Catalysis depends on D270, which acts as the Proton donor/acceptor.

The protein belongs to the AlaDH/PNT family. As to quaternary structure, homohexamer.

It localises to the cytoplasm. It carries out the reaction L-alanine + NAD(+) + H2O = pyruvate + NH4(+) + NADH + H(+). It functions in the pathway amino-acid degradation; L-alanine degradation via dehydrogenase pathway; NH(3) and pyruvate from L-alanine: step 1/1. Its activity is regulated as follows. Inhibited by p-chloromercuribenzoate and HgCl(2) and by Cu(2+) and Pb(2+) salts, unaffected by amino acids such as D-alanine and beta-alanine or by nucleotides or nucleosides. In terms of biological role, catalyzes the reversible reductive amination of pyruvate to L-alanine. Prefers L-alanine for oxidative deamination, other substrates are poorly reactive. In the other direction 2-oxobutyrate is almost as reactive as pyruvate. Ammonia is the sole amino donor for the reductive amination of pyruvate, NADPH is inert. Reductive amination proceeds through a sequential, ordered ternary-binary mechanism, where NADH binds first followed by ammonia and pyruvate; the products are released in the order L-alanine and NAD(+). A key factor in the assimilation of L-alanine as an energy source via the tricarboxylic acid cycle during sporulation. The chain is Alanine dehydrogenase (ald) from Lysinibacillus sphaericus (Bacillus sphaericus).